A 361-amino-acid polypeptide reads, in one-letter code: Holliday junction branch migration complex subunit RuvB (361 aa).

The span at 1 to 12 shows a compositional bias: acidic residues; that stretch reads MNWDETGPETDE. A disordered region spans residues 1-21; that stretch reads MNWDETGPETDEPTGPVLDDR. The large ATPase domain (RuvB-L) stretch occupies residues 13–199; that stretch reads PTGPVLDDRL…FGFTGHMEFY (187 aa). ATP contacts are provided by residues Leu-38, Arg-39, Gly-80, Lys-83, Thr-84, Thr-85, 146–148, Arg-189, Tyr-199, and Arg-236; that span reads EDF. Thr-84 serves as a coordination point for Mg(2+). Residues 200–270 are small ATPAse domain (RuvB-S); sequence APAELERVLH…IAMAALKVYE (71 aa). The interval 273-361 is head domain (RuvB-H); it reads ARGLDRLDRA…AKGQQGLFGA (89 aa). Residues Arg-309, Arg-328, and Arg-333 each coordinate DNA.

It belongs to the RuvB family. Homohexamer. Forms an RuvA(8)-RuvB(12)-Holliday junction (HJ) complex. HJ DNA is sandwiched between 2 RuvA tetramers; dsDNA enters through RuvA and exits via RuvB. An RuvB hexamer assembles on each DNA strand where it exits the tetramer. Each RuvB hexamer is contacted by two RuvA subunits (via domain III) on 2 adjacent RuvB subunits; this complex drives branch migration. In the full resolvosome a probable DNA-RuvA(4)-RuvB(12)-RuvC(2) complex forms which resolves the HJ.

It is found in the cytoplasm. The catalysed reaction is ATP + H2O = ADP + phosphate + H(+). In terms of biological role, the RuvA-RuvB-RuvC complex processes Holliday junction (HJ) DNA during genetic recombination and DNA repair, while the RuvA-RuvB complex plays an important role in the rescue of blocked DNA replication forks via replication fork reversal (RFR). RuvA specifically binds to HJ cruciform DNA, conferring on it an open structure. The RuvB hexamer acts as an ATP-dependent pump, pulling dsDNA into and through the RuvAB complex. RuvB forms 2 homohexamers on either side of HJ DNA bound by 1 or 2 RuvA tetramers; 4 subunits per hexamer contact DNA at a time. Coordinated motions by a converter formed by DNA-disengaged RuvB subunits stimulates ATP hydrolysis and nucleotide exchange. Immobilization of the converter enables RuvB to convert the ATP-contained energy into a lever motion, pulling 2 nucleotides of DNA out of the RuvA tetramer per ATP hydrolyzed, thus driving DNA branch migration. The RuvB motors rotate together with the DNA substrate, which together with the progressing nucleotide cycle form the mechanistic basis for DNA recombination by continuous HJ branch migration. Branch migration allows RuvC to scan DNA until it finds its consensus sequence, where it cleaves and resolves cruciform DNA. The polypeptide is Holliday junction branch migration complex subunit RuvB (Streptomyces griseus subsp. griseus (strain JCM 4626 / CBS 651.72 / NBRC 13350 / KCC S-0626 / ISP 5235)).